Here is a 192-residue protein sequence, read N- to C-terminus: MENSSLTLDDFLSRFQLLRPQVNGETLNRRQAAVLIPVVRRARPGLLLTQRSARLRKHAGQVAFPGGAVDSSDASLIAAALREAQEEVAIPPESVEVIGVLPPVDSVTGFQVTPVVGIIPPNLHYHASEDEVASVFEMPLSEALRLGRYHPLDIYRRGDSHRVWLSWYEHYFVWGMTAGIIRELALQIGVRP.

A Nudix hydrolase domain is found at 29-160 (RRQAAVLIPV…PLDIYRRGDS (132 aa)). Residues 67–89 (GAVDSSDASLIAAALREAQEEVA) carry the Nudix box motif. Residues E83 and E87 each contribute to the Mg(2+) site.

Belongs to the Nudix hydrolase family. PCD1 subfamily. Mn(2+) serves as cofactor. Mg(2+) is required as a cofactor.

Its function is as follows. Probably mediates the hydrolysis of some nucleoside diphosphate derivatives. This is an uncharacterized protein from Citrobacter koseri (strain ATCC BAA-895 / CDC 4225-83 / SGSC4696).